A 900-amino-acid chain; its full sequence is 3'-5' exonuclease DinG (900 aa).

One can recognise an Exonuclease domain in the interval 8 to 161 (VVDLETTGNQ…DEDAATTAQL (154 aa)). Positions 241-496 (TLVTKELGLT…KSIDLLEQQR (256 aa)) constitute a Helicase ATP-binding domain. Residue 276–283 (APLGSGKS) participates in ATP binding. Residues 448 to 451 (DEAH) carry the DEAH box motif. Positions 714–883 (YVIEYVSVVE…RYRQKKGDIK (170 aa)) constitute a Helicase C-terminal domain.

This sequence belongs to the helicase family. DinG subfamily. Type 2 sub-subfamily.

Its function is as follows. 3'-5' exonuclease. This Staphylococcus saprophyticus subsp. saprophyticus (strain ATCC 15305 / DSM 20229 / NCIMB 8711 / NCTC 7292 / S-41) protein is 3'-5' exonuclease DinG.